A 420-amino-acid polypeptide reads, in one-letter code: Structure-specific endonuclease subunit SLX1 homolog (420 aa).

Positions 19–106 (SSDNTYPWQN…QHPLKSRRLR (88 aa)) constitute a GIY-YIG domain. Disordered regions lie at residues 237 to 306 (SVEE…AAVN) and 311 to 330 (DDSA…DDVA). The segment covering 247–266 (PSSCSVPPSTGSSAAPTPGA) has biased composition (low complexity). Residues 279–301 (VDPRLDSDDRDDNHQFESPDNHE) show a composition bias toward basic and acidic residues. A compositionally biased stretch (acidic residues) spans 311–327 (DDSADDGTTDGNEDGPD). An SLX1-type zinc finger spans residues 348–405 (CGHCHQSVYQELCIVCLNATCTYRAHLLCAAQAAVHPLGQSSPSETRLVPLRHSCPRC).

The protein belongs to the SLX1 family. Forms a heterodimer with a member of the SLX4 family. Requires a divalent metal cation as cofactor.

The protein localises to the nucleus. Functionally, catalytic subunit of a heterodimeric structure-specific endonuclease that resolves DNA secondary structures generated during DNA repair and recombination. Has endonuclease activity towards branched DNA substrates, introducing single-strand cuts in duplex DNA close to junctions with ss-DNA. This Monosiga brevicollis (Choanoflagellate) protein is Structure-specific endonuclease subunit SLX1 homolog.